Consider the following 60-residue polypeptide: MDPCECSKSGTCNCGGSCTCTNCSCTSCKKSCCPCCPSGCTKCASGCVCKGKTCDTSCCQ.

The segment at 1-28 (MDPCECSKSGTCNCGGSCTCTNCSCTSC) is beta. A divalent metal cation is bound by residues Cys4, Cys6, Cys12, Cys14, Cys18, Cys20, Cys23, Cys25, Cys28, Cys32, Cys33, Cys35, Cys36, Cys40, Cys43, Cys47, Cys49, Cys54, Cys58, and Cys59. An alpha region spans residues 29 to 60 (KKSCCPCCPSGCTKCASGCVCKGKTCDTSCCQ).

The protein belongs to the metallothionein superfamily. Type 1 family.

Functionally, metallothioneins have a high content of cysteine residues that bind various heavy metals. The protein is Metallothionein B (mtb) of Trematomus bernacchii (Emerald rockcod).